The primary structure comprises 367 residues: MVAKALAQLITCIILFCHVVASVEDLTIRQVTADNRRIRPNLLGTHTESKFRLFMSDYGKNYSTREEYIHRLGIFAKNVLKAAEHQMMDPSAVHGVTQFSDLTEEEFKRMYTGVADVGGSRGGTVGAEAPMVEVDGLPEDFDWREKGGVTEVKNQGACGSCWAFSTTGAAEGAHFVSTGKLLSLSEQQLVDCDQACDPKDKKACDNGCGGGLMTNAYEYLMEAGGLEEERSYPYTGKRGHCKFDPEKVAVRVLNFTTIPLDENQIAANLVRHGPLAVGLNAVFMQTYIGGVSCPLICSKRNVNHGVLLVGYGSKGFSILRLSNKPYWIIKNSWGKKWGENGYYKLCRGHDICGINSMVSAVATQVSS.

An N-terminal signal peptide occupies residues 1–22 (MVAKALAQLITCIILFCHVVAS). The propeptide at 23-136 (VEDLTIRQVT…AEAPMVEVDG (114 aa)) is activation peptide. Asn-61 carries an N-linked (GlcNAc...) asparagine glycan. Disulfide bonds link Cys-158/Cys-208 and Cys-192/Cys-241. Residue Cys-161 is part of the active site. Asn-254 carries N-linked (GlcNAc...) asparagine glycosylation. Cys-297 and Cys-352 are joined by a disulfide. Active-site residues include His-304 and Asn-331.

It belongs to the peptidase C1 family.

Functionally, probable thiol protease. The sequence is that of Probable cysteine protease RD19D from Arabidopsis thaliana (Mouse-ear cress).